The chain runs to 780 residues: Zinc finger protein GLIS3 (780 aa).

2 stretches are compositionally biased toward polar residues: residues Pro80–Thr92 and Val106–Leu115. Disordered regions lie at residues Pro80–Ala148 and Pro290–His315. The segment covering Ser135–Ala148 has biased composition (basic residues). Over residues Leu293–His308 the composition is skewed to pro residues. The C2H2-type 1 zinc-finger motif lies at His345–His370. The C2H2-type 2; atypical zinc-finger motif lies at Phe379 to His406. 3 consecutive C2H2-type zinc fingers follow at residues Asn412–His436, Tyr442–His466, and Tyr472–His496. Disordered regions lie at residues Asp485–Glu512 and Leu527–Gly670. The Bipartite nuclear localization signal motif lies at Arg490–Lys506. Basic and acidic residues predominate over residues Ser497–Glu512. Residues His567–Ala577 are compositionally biased toward low complexity. Residues Val593–Pro605 show a composition bias toward polar residues.

This sequence belongs to the GLI C2H2-type zinc-finger protein family. In the embryo, expressed at high levels in the kidney and testis. In the adult, expressed at high levels in the kidney and uterus and at lower levels in the brain, lung, skeletal muscle and pancreas.

The protein resides in the nucleus. Functionally, acts both as a repressor and activator of transcription. Binds to the consensus sequence 5'-GACCACCCAC-3'. This is Zinc finger protein GLIS3 from Mus musculus (Mouse).